The following is a 263-amino-acid chain: Acetylglutamate kinase (263 aa).

Residues 48-49, arginine 70, and asparagine 162 contribute to the substrate site; that span reads GG.

This sequence belongs to the acetylglutamate kinase family. ArgB subfamily.

The protein localises to the cytoplasm. It catalyses the reaction N-acetyl-L-glutamate + ATP = N-acetyl-L-glutamyl 5-phosphate + ADP. It functions in the pathway amino-acid biosynthesis; L-arginine biosynthesis; N(2)-acetyl-L-ornithine from L-glutamate: step 2/4. Catalyzes the ATP-dependent phosphorylation of N-acetyl-L-glutamate. The protein is Acetylglutamate kinase of Vibrio parahaemolyticus serotype O3:K6 (strain RIMD 2210633).